Consider the following 462-residue polypeptide: MGTIYLFRKTQRSLLGKLTQEFRLVTADRRSWKILLFGAINVVCTGFLLTWCSSTNSMALTAYTYLTIFDLFSLITSLISYWVMMKKPSPTYSFGFERLEVLAVFASTVLAQLGALFILKESAERFLEQPEIHTGRLLVGTFVALFFNLFTMLSIRNKPFAYVSEAASTSWLQEHVADLSRSLCGVIPGLSSIFLPRMNPFVLIDIAGALALCITYMLIEINNYFAVDTASAIAIAVMTFGTMYPMSVYSGKVLLQTTPPHVIGQLDKLLREVSTLDGVLEVRNEHFWTLGFGTMAGSVHVRIRRDANEQMVLAHVTNRLSTLVSTPTVQIFKDDWARPVLASGTMPPNMLNIPEHHVIQMPSLKSTVDELNPMTSTPSKPSGPPPEFAFNTPGKNMNPVILSNNQTRPFGVGYGTTPYTTTFNQGLGVPGVGNTQGLRTGLTNVANRYGTYTPGQFTQFRQ.

The Cytoplasmic portion of the chain corresponds to 1–33; the sequence is MGTIYLFRKTQRSLLGKLTQEFRLVTADRRSWK. Residues 34-54 traverse the membrane as a helical segment; that stretch reads ILLFGAINVVCTGFLLTWCSS. Residues 55–64 lie on the Extracellular side of the membrane; sequence TNSMALTAYT. A helical transmembrane segment spans residues 65–85; the sequence is YLTIFDLFSLITSLISYWVMM. Topologically, residues 86-98 are cytoplasmic; it reads KKPSPTYSFGFER. The helical transmembrane segment at 99–119 threads the bilayer; it reads LEVLAVFASTVLAQLGALFIL. The Extracellular segment spans residues 120-134; it reads KESAERFLEQPEIHT. The helical transmembrane segment at 135 to 155 threads the bilayer; sequence GRLLVGTFVALFFNLFTMLSI. Topologically, residues 156 to 200 are cytoplasmic; the sequence is RNKPFAYVSEAASTSWLQEHVADLSRSLCGVIPGLSSIFLPRMNP. A helical transmembrane segment spans residues 201–221; the sequence is FVLIDIAGALALCITYMLIEI. The Extracellular portion of the chain corresponds to 222–223; it reads NN. The helical transmembrane segment at 224–244 threads the bilayer; the sequence is YFAVDTASAIAIAVMTFGTMY. At 245 to 462 the chain is on the cytoplasmic side; sequence PMSVYSGKVL…TPGQFTQFRQ (218 aa).

It belongs to the cation diffusion facilitator (CDF) transporter (TC 2.A.4) family. SLC30A subfamily. As to quaternary structure, heterodimer with SLC30A5; form a functional zinc ion transmembrane transporter.

It is found in the golgi apparatus. Its subcellular location is the trans-Golgi network membrane. Functionally, has probably no intrinsic transporter activity but together with SLC30A5 forms a functional zinc ion:proton antiporter heterodimer, mediating zinc entry into the lumen of organelles along the secretory pathway. As part of that zinc ion:proton antiporter, contributes to zinc ion homeostasis within the early secretory pathway and regulates the activation and folding of enzymes like alkaline phosphatases and enzymes involved in phosphatidylinositol glycan anchor biosynthesis. The protein is Zinc transporter 6-B (slc30a6-b) of Xenopus laevis (African clawed frog).